The chain runs to 96 residues: UPF0251 protein VPA0321 (96 aa).

This sequence belongs to the UPF0251 family.

This chain is UPF0251 protein VPA0321, found in Vibrio parahaemolyticus serotype O3:K6 (strain RIMD 2210633).